A 495-amino-acid polypeptide reads, in one-letter code: Homeobox protein ceh-21 (495 aa).

Residues 1-14 (MSQQFQASSGTGSA) are compositionally biased toward polar residues. Disordered regions lie at residues 1-24 (MSQQ…TEHE) and 89-267 (TAES…PGGE). Over residues 106–120 (LEEKSDKSSDGDGTS) the composition is skewed to basic and acidic residues. The span at 132-145 (NETEEDHEEKEDEA) shows a compositional bias: acidic residues. A compositionally biased stretch (basic and acidic residues) spans 149–162 (SRRESTRLKRKLLE). Composition is skewed to polar residues over residues 163–179 (SQKT…ASSK) and 199–217 (TPEQ…TVRA). Residues 218-233 (SSTCGSSVSSTSTVSS) show a composition bias toward low complexity. Basic and acidic residues predominate over residues 242–254 (RATETPKLEELAP). Residues 284–370 (NAQIGDDEEL…VRRALCFLPK (87 aa)) constitute a DNA-binding region (CUT). Positions 389-449 (KTVKVIRLTF…MNSRRRLRID (61 aa)) form a DNA-binding region, homeobox. The tract at residues 450 to 473 (QQISRSSRSTGNGADTEDELDEED) is disordered. The span at 464–473 (DTEDELDEED) shows a compositional bias: acidic residues.

The protein belongs to the CUT homeobox family.

The protein resides in the nucleus. Functionally, probable DNA-binding regulatory protein involved in cell-fate specification. The chain is Homeobox protein ceh-21 (ceh-21) from Caenorhabditis elegans.